The chain runs to 535 residues: Zinc transporter ZIP5 (535 aa).

A signal peptide spans 1–19 (MGPPVHHLLTGLCVGVALG). Residues 20 to 210 (WVGGSVPNLG…PAPPGDVLSA (191 aa)) are Extracellular-facing. 2 N-linked (GlcNAc...) asparagine glycosylation sites follow: N49 and N158. A helical membrane pass occupies residues 211–231 (LLHSGLAVLFLSLPAPLSLLL). Over 232 to 242 (LRLLGPRLLRP) the chain is Cytoplasmic. A helical membrane pass occupies residues 243 to 263 (VLGFLGALAVGTLCGDALLHL). Residues 264–285 (LPHAQGGRHTGPSEQSEEDLGP) lie on the Extracellular side of the membrane. The helical transmembrane segment at 286–306 (GLSVLGGLFLLFMLENTLGLV) threads the bilayer. The Cytoplasmic portion of the chain corresponds to 307–439 (RHRGLRPRCC…LLQEGLSFRK (133 aa)). A disordered region spans residues 316 to 373 (CRNKRDLGEPNPDPEDGSGMVLRPLQAASEPEVQGQRENRQSSPSLAPPGHQGHSHEH). The residue at position 333 (S333) is a Phosphoserine. H371 bears the Pros-methylhistidine mark. A helical transmembrane segment spans residues 440–460 (LLLLSLVSGALGLGGAALGVG). Residues 461–465 (LSLGP) are Extracellular-facing. A helical membrane pass occupies residues 466–486 (VPLTPWVFGTTAGVFLYVALV). At 487 to 503 (DMLPTLLRPPEPLPVFH) the chain is on the cytoplasmic side. Residues 504–524 (VLLQGLGLLLGGSLMFTIALL) traverse the membrane as a helical segment. Over 525–535 (EEQLVPTVPDG) the chain is Extracellular.

The protein belongs to the ZIP transporter (TC 2.A.5) family. In terms of assembly, homodimer. Post-translationally, N-Glycosylated. Methylated at His-371 by METTL9. In terms of tissue distribution, expressed in all stages of eye development and primarily in the sclera and several layers of the retina, including the inner segment, outer plexiform layer and ganglion cell layer. Expressed in pancreas, kidney and the proximal and distal small intestine as well as in the embryonic visceral yolk sac. In the proximal intestine, expression is predominant in the crypts but diminishes toward the apical regions of the villi.

The protein resides in the basolateral cell membrane. The catalysed reaction is Zn(2+)(in) = Zn(2+)(out). Its function is as follows. Uniporter that transports zinc(2+) into polarized cells of enterocytes, pancreatic acinar and endoderm cells across the basolateral membrane and participates, notably, in zinc excretion from the intestine by the uptake of zinc from the blood into the intestine. The transport mechanism is temperature- and concentration-dependent and saturable. In addition, is also a high affinity copper transporter in vitro. Also may regulate glucose-stimulated insulin secretion (GSIS) in islets primarily through the zinc-activated SIRT1-PPARGC1A axis. Could regulate the BMP/TGF-beta (bone morphogenetic protein/transforming growth factor-beta) signaling pathway and modulates extracellular matrix (ECM) proteins of the sclera. Plays a role in eye development. In Mus musculus (Mouse), this protein is Zinc transporter ZIP5.